A 130-amino-acid polypeptide reads, in one-letter code: Protein NrdI (130 aa).

The protein belongs to the NrdI family.

In terms of biological role, probably involved in ribonucleotide reductase function. The polypeptide is Protein NrdI (Bacillus velezensis (strain DSM 23117 / BGSC 10A6 / LMG 26770 / FZB42) (Bacillus amyloliquefaciens subsp. plantarum)).